We begin with the raw amino-acid sequence, 266 residues long: Putative carbamate hydrolase RutD (266 aa).

The protein belongs to the AB hydrolase superfamily. Hydrolase RutD family.

The enzyme catalyses carbamate + 2 H(+) = NH4(+) + CO2. Involved in pyrimidine catabolism. May facilitate the hydrolysis of carbamate, a reaction that can also occur spontaneously. This Enterobacter cloacae subsp. cloacae (strain ATCC 13047 / DSM 30054 / NBRC 13535 / NCTC 10005 / WDCM 00083 / NCDC 279-56) protein is Putative carbamate hydrolase RutD.